A 194-amino-acid chain; its full sequence is tRNA (guanosine(18)-2'-O)-methyltransferase (194 aa).

S-adenosyl-L-methionine contacts are provided by residues Thr99, 122 to 126, Ile142, and Leu151; that span reads GAEKW.

It belongs to the class IV-like SAM-binding methyltransferase superfamily. RNA methyltransferase TrmH family. Monomer.

It catalyses the reaction guanosine(18) in tRNA + S-adenosyl-L-methionine = 2'-O-methylguanosine(18) in tRNA + S-adenosyl-L-homocysteine + H(+). Stimulated by magnesium ions and spermine. Inhibited by S-adenosyl-homocysteine. Catalyzes the 2'-O methylation of guanosine at position 18 in tRNA. The chain is tRNA (guanosine(18)-2'-O)-methyltransferase from Thermus thermophilus (strain ATCC BAA-163 / DSM 7039 / HB27).